A 194-amino-acid chain; its full sequence is Cytochrome c oxidase assembly protein CtaG (194 aa).

At 1–12 (MALRGPAKTVAQ) the chain is on the cytoplasmic side. A helical; Signal-anchor for type II membrane protein membrane pass occupies residues 13–35 (TVSVVIFMGALAWASVPLYDWFC). Topologically, residues 36 to 194 (RVTGFGGVTG…IEENSDTSLN (159 aa)) are periplasmic.

It belongs to the COX11/CtaG family.

It localises to the cell inner membrane. Exerts its effect at some terminal stage of cytochrome c oxidase synthesis, probably by being involved in the insertion of the copper B into subunit I. The protein is Cytochrome c oxidase assembly protein CtaG of Roseobacter denitrificans (strain ATCC 33942 / OCh 114) (Erythrobacter sp. (strain OCh 114)).